Consider the following 465-residue polypeptide: Lactaldehyde dehydrogenase (465 aa).

220 to 225 (GSVEVG) is an NAD(+) binding site. Catalysis depends on residues glutamate 240 and cysteine 274.

It belongs to the aldehyde dehydrogenase family. In terms of assembly, homotetramer.

The enzyme catalyses (S)-lactaldehyde + NAD(+) + H2O = (S)-lactate + NADH + 2 H(+). It functions in the pathway cofactor biosynthesis; coenzyme F420 biosynthesis. Functionally, involved in F420 biosynthesis through the oxidation of lactaldehyde to lactate. The protein is Lactaldehyde dehydrogenase of Methanococcus aeolicus (strain ATCC BAA-1280 / DSM 17508 / OCM 812 / Nankai-3).